We begin with the raw amino-acid sequence, 184 residues long: MGVIQTLDRLMTNPMPEGRVEDILRPEGENPLLEKGYVTTSVDALLNWARTGSMWPMTFGLACCAVEMMHAGAARLDLDRYGVVFRPSPRQSDVMIVAGTLVNKMAPALRKVYDQMPDPKWVISMGSCANGGGYYHYSYSVVRGCDRIVPVDIYVPGCPPTAEALVYGILQLQKKIWRTQTIAR.

C63, C64, C128, and C158 together coordinate [4Fe-4S] cluster.

The protein belongs to the complex I 20 kDa subunit family. As to quaternary structure, NDH-1 is composed of 14 different subunits. Subunits NuoB, C, D, E, F, and G constitute the peripheral sector of the complex. The cofactor is [4Fe-4S] cluster.

The protein resides in the cell inner membrane. The enzyme catalyses a quinone + NADH + 5 H(+)(in) = a quinol + NAD(+) + 4 H(+)(out). NDH-1 shuttles electrons from NADH, via FMN and iron-sulfur (Fe-S) centers, to quinones in the respiratory chain. Couples the redox reaction to proton translocation (for every two electrons transferred, four hydrogen ions are translocated across the cytoplasmic membrane), and thus conserves the redox energy in a proton gradient. The protein is NADH-quinone oxidoreductase subunit B of Xanthomonas campestris pv. campestris (strain 8004).